We begin with the raw amino-acid sequence, 313 residues long: GTP cyclohydrolase 1 (313 aa).

Positions 1–10 (MAQETTRDGS) are enriched in basic and acidic residues. The tract at residues 1 to 120 (MAQETTRDGS…SRGTRERLEE (120 aa)) is disordered. Residues 11–20 (DSPSGSVSPP) are compositionally biased toward low complexity. A compositionally biased stretch (basic residues) spans 29–39 (KDKKSSKKRAH). Residues 40-64 (SSGERRSSVSKPARDPSDKPEESPS) are compositionally biased toward basic and acidic residues. A compositionally biased stretch (low complexity) spans 72 to 102 (TSSTAAAAVPSTITEEVSPSTSVTRSPSPVI). 3 residues coordinate Zn(2+): Cys202, His205, and Cys273.

It belongs to the GTP cyclohydrolase I family. As to quaternary structure, toroid-shaped homodecamer, composed of two pentamers of five dimers.

The catalysed reaction is GTP + H2O = 7,8-dihydroneopterin 3'-triphosphate + formate + H(+). It participates in cofactor biosynthesis; 7,8-dihydroneopterin triphosphate biosynthesis; 7,8-dihydroneopterin triphosphate from GTP: step 1/1. GTP shows a positive allosteric effect, and tetrahydrobiopterin inhibits the enzyme activity. In terms of biological role, GTP cyclohydrolase 1 is the first enzyme in the biosynthetic pathway leading to folic acid. The chain is GTP cyclohydrolase 1 (gch-1) from Neurospora crassa (strain ATCC 24698 / 74-OR23-1A / CBS 708.71 / DSM 1257 / FGSC 987).